The chain runs to 389 residues: 1-deoxy-D-xylulose 5-phosphate reductoisomerase (389 aa).

Positions 11, 12, 13, 14, 39, and 122 each coordinate NADPH. K123 is a 1-deoxy-D-xylulose 5-phosphate binding site. Residue E124 coordinates NADPH. D148 provides a ligand contact to Mn(2+). 1-deoxy-D-xylulose 5-phosphate-binding residues include S149, E150, S174, and H197. E150 contributes to the Mn(2+) binding site. Position 203 (G203) interacts with NADPH. 1-deoxy-D-xylulose 5-phosphate-binding residues include S210, N215, K216, and E219. Mn(2+) is bound at residue E219.

The protein belongs to the DXR family. Requires Mg(2+) as cofactor. It depends on Mn(2+) as a cofactor.

It carries out the reaction 2-C-methyl-D-erythritol 4-phosphate + NADP(+) = 1-deoxy-D-xylulose 5-phosphate + NADPH + H(+). It participates in isoprenoid biosynthesis; isopentenyl diphosphate biosynthesis via DXP pathway; isopentenyl diphosphate from 1-deoxy-D-xylulose 5-phosphate: step 1/6. Functionally, catalyzes the NADPH-dependent rearrangement and reduction of 1-deoxy-D-xylulose-5-phosphate (DXP) to 2-C-methyl-D-erythritol 4-phosphate (MEP). The protein is 1-deoxy-D-xylulose 5-phosphate reductoisomerase of Leptospira interrogans serogroup Icterohaemorrhagiae serovar copenhageni (strain Fiocruz L1-130).